The primary structure comprises 275 residues: MPELPEVEVTRRGIEPFVAGRRVERVDVRTAMLRWPVPAGLAEQLRAREVLAVERRGKYLLFEVDAGWFIVHLGMTGTLRVLPAAGVPVAAKHDHIDWIFDEFVLRFRDPRRFGAVLWHAREAGDVHAHPLLASLGVEPFSPAFTGALLHARTRGRTVSVKQALLAGDMVVGVGNIYASESLFRAGIRPTTAAGKVSLPRYERLADAVRATLADAIERGGSTLRDFVGSNGESGYFQLDCFVYDRAGLPCRVCGTPIRQIVQGQRSTYFCPTCQR.

Pro-2 (schiff-base intermediate with DNA) is an active-site residue. The active-site Proton donor is the Glu-3. Lys-58 functions as the Proton donor; for beta-elimination activity in the catalytic mechanism. The DNA site is built by His-93, Arg-111, and Arg-156. The FPG-type zinc finger occupies 241-275 (FVYDRAGLPCRVCGTPIRQIVQGQRSTYFCPTCQR). Arg-265 serves as the catalytic Proton donor; for delta-elimination activity.

Belongs to the FPG family. Monomer. Requires Zn(2+) as cofactor.

The catalysed reaction is Hydrolysis of DNA containing ring-opened 7-methylguanine residues, releasing 2,6-diamino-4-hydroxy-5-(N-methyl)formamidopyrimidine.. The enzyme catalyses 2'-deoxyribonucleotide-(2'-deoxyribose 5'-phosphate)-2'-deoxyribonucleotide-DNA = a 3'-end 2'-deoxyribonucleotide-(2,3-dehydro-2,3-deoxyribose 5'-phosphate)-DNA + a 5'-end 5'-phospho-2'-deoxyribonucleoside-DNA + H(+). In terms of biological role, involved in base excision repair of DNA damaged by oxidation or by mutagenic agents. Acts as a DNA glycosylase that recognizes and removes damaged bases. Has a preference for oxidized purines, such as 7,8-dihydro-8-oxoguanine (8-oxoG). Has AP (apurinic/apyrimidinic) lyase activity and introduces nicks in the DNA strand. Cleaves the DNA backbone by beta-delta elimination to generate a single-strand break at the site of the removed base with both 3'- and 5'-phosphates. This Burkholderia ambifaria (strain MC40-6) protein is Formamidopyrimidine-DNA glycosylase.